The following is a 240-amino-acid chain: 2,3,4,5-tetrahydropyridine-2,6-dicarboxylate N-acetyltransferase (240 aa).

The protein belongs to the transferase hexapeptide repeat family. DapH subfamily.

The catalysed reaction is (S)-2,3,4,5-tetrahydrodipicolinate + acetyl-CoA + H2O = L-2-acetamido-6-oxoheptanedioate + CoA. It participates in amino-acid biosynthesis; L-lysine biosynthesis via DAP pathway; LL-2,6-diaminopimelate from (S)-tetrahydrodipicolinate (acetylase route): step 1/3. Functionally, catalyzes the transfer of an acetyl group from acetyl-CoA to tetrahydrodipicolinate. This is 2,3,4,5-tetrahydropyridine-2,6-dicarboxylate N-acetyltransferase from Halalkalibacterium halodurans (strain ATCC BAA-125 / DSM 18197 / FERM 7344 / JCM 9153 / C-125) (Bacillus halodurans).